The primary structure comprises 432 residues: Adenosylmethionine-8-amino-7-oxononanoate aminotransferase (432 aa).

Trp52 provides a ligand contact to substrate. 112-113 (GS) lines the pyridoxal 5'-phosphate pocket. Substrate is bound at residue Tyr144. A pyridoxal 5'-phosphate-binding site is contributed by Asp245. Residues Lys274 and Gly307 each contribute to the substrate site. Position 274 is an N6-(pyridoxal phosphate)lysine (Lys274). 308 to 309 (PT) contacts pyridoxal 5'-phosphate. Substrate is bound at residue Arg391.

The protein belongs to the class-III pyridoxal-phosphate-dependent aminotransferase family. BioA subfamily. Homodimer. It depends on pyridoxal 5'-phosphate as a cofactor.

It localises to the cytoplasm. The catalysed reaction is (8S)-8-amino-7-oxononanoate + S-adenosyl-L-methionine = S-adenosyl-4-methylsulfanyl-2-oxobutanoate + (7R,8S)-7,8-diammoniononanoate. It participates in cofactor biosynthesis; biotin biosynthesis; 7,8-diaminononanoate from 8-amino-7-oxononanoate (SAM route): step 1/1. Catalyzes the transfer of the alpha-amino group from S-adenosyl-L-methionine (SAM) to 7-keto-8-aminopelargonic acid (KAPA) to form 7,8-diaminopelargonic acid (DAPA). It is the only aminotransferase known to utilize SAM as an amino donor. The sequence is that of Adenosylmethionine-8-amino-7-oxononanoate aminotransferase from Buchnera aphidicola subsp. Schizaphis graminum (strain Sg).